The primary structure comprises 793 residues: DNA mismatch repair protein MutS (793 aa).

ATP is bound at residue 589 to 596; sequence GPNMSGKS.

The protein belongs to the DNA mismatch repair MutS family.

Its function is as follows. This protein is involved in the repair of mismatches in DNA. It is possible that it carries out the mismatch recognition step. This protein has a weak ATPase activity. In Thermotoga sp. (strain RQ2), this protein is DNA mismatch repair protein MutS.